The sequence spans 142 residues: Transcriptional regulator MraZ (142 aa).

SpoVT-AbrB domains lie at 5–51 and 77–120; these read ASAL…PRPE and AMDV…DAQT.

It belongs to the MraZ family. As to quaternary structure, forms oligomers.

It localises to the cytoplasm. The protein localises to the nucleoid. This Paraburkholderia phytofirmans (strain DSM 17436 / LMG 22146 / PsJN) (Burkholderia phytofirmans) protein is Transcriptional regulator MraZ.